Consider the following 407-residue polypeptide: Snake venom metalloproteinase ACLH (407 aa).

The N-terminal stretch at 1 to 20 (MIQVLLVTLCLAAFPYQGSS) is a signal peptide. Positions 21–187 (IILESGNVND…PIKKASQLNL (167 aa)) are excised as a propeptide. The Peptidase M12B domain occupies 193 to 389 (RYVELVTVVD…ENPQCILNKP (197 aa)). Residues Glu196 and Asp280 each contribute to the Ca(2+) site. Intrachain disulfides connect Cys304-Cys384, Cys344-Cys368, and Cys346-Cys351. Zn(2+) is bound at residue His329. Glu330 is an active-site residue. The Zn(2+) site is built by His333 and His339. Asn367 is a glycosylation site (N-linked (GlcNAc...) asparagine). The Ca(2+) site is built by Cys384 and Asn387.

Belongs to the venom metalloproteinase (M12B) family. P-I subfamily. In terms of assembly, monomer. Requires Zn(2+) as cofactor. Post-translationally, contains sialic acid terminally alpha(2-6)-linked to galactose in a complex N-glycan chain. As to expression, expressed by the venom gland.

The protein localises to the secreted. Its function is as follows. This zinc hemorrhagic metalloproteinase has fibrino(geno)lytic activities. It causes hemorrhage and has myonecrotic activity on both fiber types I and II. The recombinant enzyme, without post-translational modifications, also has proteolytic activity, but does not show any hemorrhagic activity. This is Snake venom metalloproteinase ACLH from Agkistrodon contortrix laticinctus (Broad-banded copperhead).